Reading from the N-terminus, the 508-residue chain is CBL-interacting protein kinase 19 (508 aa).

The disordered stretch occupies residues 1–24 (MAATPPSSQHRRPLSSSASAASLA). Low complexity predominate over residues 14–24 (LSSSASAASLA). In terms of domain architecture, Protein kinase spans 37-291 (YELGRLLGHG…VKEVMESRWF (255 aa)). ATP-binding positions include 43 to 51 (LGHGTFAKV) and K66. D159 (proton acceptor) is an active-site residue. Residues 177–206 (DFGLSAVADQFHPDGLLHTFCGTPSYVAPE) are activation loop. The disordered stretch occupies residues 311-372 (ADGDNDMPEL…EERRQRPLGS (62 aa)). Residues 313–322 (GDNDMPELEP) are compositionally biased toward acidic residues. A compositionally biased stretch (pro residues) spans 323–337 (SEPPPPPPFPPPPPQ). Residues 338-347 (QDDDGEESGW) show a composition bias toward acidic residues. An NAF domain is found at 354–398 (ASCPATLSSEERRQRPLGSLTRPASLNAFDIISFSKGFDLSGLFE). The tract at residues 401 to 430 (GSEVRFISAEPMQTIITKLEEIAKVKSFFV) is PPI.

Belongs to the protein kinase superfamily. CAMK Ser/Thr protein kinase family. SNF1 subfamily. Mn(2+) serves as cofactor. Autophosphorylated. In terms of tissue distribution, expressed in roots, leaf blades and sheaths and panicles.

It catalyses the reaction L-seryl-[protein] + ATP = O-phospho-L-seryl-[protein] + ADP + H(+). It carries out the reaction L-threonyl-[protein] + ATP = O-phospho-L-threonyl-[protein] + ADP + H(+). Functionally, CIPK serine-threonine protein kinases interact with CBL proteins. Binding of a CBL protein to the regulatory NAF domain of CIPK protein lead to the activation of the kinase in a calcium-dependent manner. This is CBL-interacting protein kinase 19 (CIPK19) from Oryza sativa subsp. japonica (Rice).